The sequence spans 359 residues: Nicotinate-nucleotide--dimethylbenzimidazole phosphoribosyltransferase (359 aa).

Catalysis depends on Glu318, which acts as the Proton acceptor.

This sequence belongs to the CobT family. In terms of assembly, homodimer.

It carries out the reaction 5,6-dimethylbenzimidazole + nicotinate beta-D-ribonucleotide = alpha-ribazole 5'-phosphate + nicotinate + H(+). It participates in nucleoside biosynthesis; alpha-ribazole biosynthesis; alpha-ribazole from 5,6-dimethylbenzimidazole: step 1/2. Catalyzes the synthesis of alpha-ribazole-5'-phosphate from nicotinate mononucleotide (NAMN) and 5,6-dimethylbenzimidazole (DMB). In Escherichia coli (strain UTI89 / UPEC), this protein is Nicotinate-nucleotide--dimethylbenzimidazole phosphoribosyltransferase.